The primary structure comprises 92 residues: MKVPGAALAVLLCTMSLCSQVFSPFGADTPIACCFSYVSKQIPRKFIVDCFETSSQCSKPGIIFETRKGRQACANPSEAWVQEYVADLKLKA.

Positions 1–19 (MKVPGAALAVLLCTMSLCS) are cleaved as a signal peptide. Disulfide bonds link cysteine 33–cysteine 57 and cysteine 34–cysteine 73.

The protein belongs to the intercrine beta (chemokine CC) family. Self-associates. Also heterodimer of MIP-1-alpha(4-69) and MIP-1-beta(3-69). Interacts with CCR1.

The protein localises to the secreted. Monokine with inflammatory and chemokinetic properties. Binds to CCR1, CCR4 and CCR5. One of the major HIV-suppressive factors produced by CD8+ T-cells. Recombinant MIP-1-alpha induces a dose-dependent inhibition of different strains of HIV-1, HIV-2, and simian immunodeficiency virus (SIV). This Canis lupus familiaris (Dog) protein is C-C motif chemokine 3 (CCL3).